We begin with the raw amino-acid sequence, 644 residues long: Chaperone protein DnaK (644 aa).

Residue Thr199 is modified to Phosphothreonine; by autocatalysis. Positions 605-644 are disordered; sequence KKSSEGQAAQGQTQSQESTKPVEEGVVDAEFEEVKEEDKK. A compositionally biased stretch (polar residues) spans 609–623; it reads EGQAAQGQTQSQEST. Over residues 629-644 the composition is skewed to acidic residues; it reads GVVDAEFEEVKEEDKK.

The protein belongs to the heat shock protein 70 family.

In terms of biological role, acts as a chaperone. This is Chaperone protein DnaK from Legionella pneumophila (strain Paris).